The chain runs to 386 residues: Probable copper-dependent oxygenase M1 (386 aa).

The first 22 residues, 1 to 22 (MLRMKKICTAFLTIALCTHVLA), serve as a signal peptide directing secretion. N86 is a glycosylation site (N-linked (GlcNAc...) asparagine). The chain crosses the membrane as a helical span at residues 334–354 (FVVPIAAIAFIALTIGAGYVF).

This sequence belongs to the clz3 oxygenase family.

The protein resides in the membrane. The protein operates within secondary metabolite biosynthesis. In terms of biological role, probable copper-dependent oxygenase; part of the gene cluster that mediates the biosynthesis of squalestatin S1 (SQS1, also known as zaragozic acid A), a heavily oxidized fungal polyketide that offers potent cholesterol lowering activity by targeting squalene synthase (SS). SQS1 is composed of a 2,8-dioxobicyclic[3.2.1]octane-3,4,5-tricarboxyclic acid core that is connected to two lipophilic polyketide arms. These initial steps feature the priming of an unusual benzoic acid starter unit onto the highly reducing polyketide synthase pks2, followed by oxaloacetate extension and product release to generate a tricarboxylic acid containing product. The phenylalanine ammonia lyase (PAL) M7 and the acyl-CoA ligase M9 are involved in transforming phenylalanine into benzoyl-CoA. The citrate synthase-like protein R3 is involved in connecting the C-alpha-carbons of the hexaketide chain and oxaloacetate to afford the tricarboxylic acid unit. The potential hydrolytic enzymes, M8 and M10, are in close proximity to pks2 and may participate in product release. On the other side, the tetraketide arm is synthesized by a the squalestatin tetraketide synthase pks1 and enzymatically esterified to the core in the last biosynthetic step, by the acetyltransferase M4. The biosynthesis of the tetraketide must involve 3 rounds of chain extension. After the first and second rounds methyl-transfer occurs, and in all rounds of extension the ketoreductase and dehydratase are active. The enoyl reductase and C-MeT of pks1 are not active in the final round of extension. The acetyltransferase M4 appears to have a broad substrate selectivity for its acyl CoA substrate, allowing the in vitro synthesis of novel squalestatins. The biosynthesis of SQS1 requires several oxidative steps likely performed by oxidoreductases M1, R1 and R2. Finally, in support of the identification of the cluster as being responsible for SQS1 production, the cluster contains a gene encoding a putative squalene synthase (SS) R6, suggesting a likely mechanism for self-resistance. The polypeptide is Probable copper-dependent oxygenase M1 (Phoma sp. (strain ATCC 20986 / MF5453)).